Reading from the N-terminus, the 436-residue chain is Gamma-glutamyl phosphate reductase (436 aa).

The protein belongs to the gamma-glutamyl phosphate reductase family.

Its subcellular location is the cytoplasm. It catalyses the reaction L-glutamate 5-semialdehyde + phosphate + NADP(+) = L-glutamyl 5-phosphate + NADPH + H(+). It participates in amino-acid biosynthesis; L-proline biosynthesis; L-glutamate 5-semialdehyde from L-glutamate: step 2/2. Catalyzes the NADPH-dependent reduction of L-glutamate 5-phosphate into L-glutamate 5-semialdehyde and phosphate. The product spontaneously undergoes cyclization to form 1-pyrroline-5-carboxylate. The polypeptide is Gamma-glutamyl phosphate reductase (Prochlorococcus marinus (strain AS9601)).